The sequence spans 118 residues: Small ribosomal subunit protein eS10 (118 aa).

Positions 91-118 are disordered; it reads RLKNAPAERPRPSRGGPRRGGYRGRARD. Over residues 106 to 118 the composition is skewed to basic residues; sequence GPRRGGYRGRARD.

Belongs to the eukaryotic ribosomal protein eS10 family. Component of the small ribosomal subunit. Mature ribosomes consist of a small (40S) and a large (60S) subunit. The 40S subunit contains about 32 different proteins and 1 molecule of RNA (18S). The 60S subunit contains 45 different proteins and 3 molecules of RNA (25S, 5.8S and 5S).

It is found in the cytoplasm. Its function is as follows. Component of the ribosome, a large ribonucleoprotein complex responsible for the synthesis of proteins in the cell. The small ribosomal subunit (SSU) binds messenger RNAs (mRNAs) and translates the encoded message by selecting cognate aminoacyl-transfer RNA (tRNA) molecules. The large subunit (LSU) contains the ribosomal catalytic site termed the peptidyl transferase center (PTC), which catalyzes the formation of peptide bonds, thereby polymerizing the amino acids delivered by tRNAs into a polypeptide chain. The nascent polypeptides leave the ribosome through a tunnel in the LSU and interact with protein factors that function in enzymatic processing, targeting, and the membrane insertion of nascent chains at the exit of the ribosomal tunnel. This chain is Small ribosomal subunit protein eS10 (RPS10), found in Candida albicans (strain SC5314 / ATCC MYA-2876) (Yeast).